A 602-amino-acid chain; its full sequence is Cholinesterase (602 aa).

The signal sequence occupies residues 1–28; the sequence is MQSKGTIISIQFLLRFLLLWVLIGKSHT. A glycan (N-linked (GlcNAc...) asparagine) is linked at Asn85. Cys93 and Cys120 are oxidised to a cystine. Asn134 carries an N-linked (GlcNAc...) asparagine glycan. 144 to 145 provides a ligand contact to substrate; that stretch reads GG. Ser226 acts as the Acyl-ester intermediate in catalysis. Ser226 carries the post-translational modification Phosphoserine. Residues Asn269 and Asn284 are each glycosylated (N-linked (GlcNAc...) asparagine). The cysteines at positions 280 and 291 are disulfide-linked. Residue Glu353 is the Charge relay system of the active site. Asn369 carries an N-linked (GlcNAc...) asparagine glycan. An intrachain disulfide couples Cys428 to Cys547. His466 serves as the catalytic Charge relay system. 4 N-linked (GlcNAc...) asparagine glycosylation sites follow: Asn483, Asn509, Asn513, and Asn514.

It belongs to the type-B carboxylesterase/lipase family. In terms of assembly, homotetramer; disulfide-linked. Dimer of dimers.

It localises to the secreted. The catalysed reaction is an acylcholine + H2O = a carboxylate + choline + H(+). Functionally, esterase with broad substrate specificity. Contributes to the inactivation of the neurotransmitter acetylcholine. Can degrade neurotoxic organophosphate esters. The protein is Cholinesterase (BCHE) of Felis catus (Cat).